The chain runs to 38 residues: MKVRPSVKPMCEHCKVIRRKGRVMVICPANPKHKQRQG.

The protein belongs to the bacterial ribosomal protein bL36 family.

This is Large ribosomal subunit protein bL36 from Enterococcus faecalis (strain ATCC 700802 / V583).